Here is a 121-residue protein sequence, read N- to C-terminus: Large ribosomal subunit protein bL12 (121 aa).

It belongs to the bacterial ribosomal protein bL12 family. In terms of assembly, homodimer. Part of the ribosomal stalk of the 50S ribosomal subunit. Forms a multimeric L10(L12)X complex, where L10 forms an elongated spine to which 2 to 4 L12 dimers bind in a sequential fashion. Binds GTP-bound translation factors.

Forms part of the ribosomal stalk which helps the ribosome interact with GTP-bound translation factors. Is thus essential for accurate translation. The sequence is that of Large ribosomal subunit protein bL12 from Shewanella halifaxensis (strain HAW-EB4).